Reading from the N-terminus, the 329-residue chain is GTP 3',8-cyclase (329 aa).

The region spanning 1-229 is the Radical SAM core domain; it reads MNPVDYLRIS…TAFVQGNGPA (229 aa). Arg8 lines the GTP pocket. [4Fe-4S] cluster contacts are provided by Cys15 and Cys19. Tyr21 is an S-adenosyl-L-methionine binding site. Cys22 serves as a coordination point for [4Fe-4S] cluster. GTP is bound at residue Arg60. Gly64 contacts S-adenosyl-L-methionine. A GTP-binding site is contributed by Thr91. Ser115 is a binding site for S-adenosyl-L-methionine. GTP is bound at residue Lys155. S-adenosyl-L-methionine is bound at residue Met189. The [4Fe-4S] cluster site is built by Cys252 and Cys255. Residue 257–259 coordinates GTP; that stretch reads RMR. Cys269 provides a ligand contact to [4Fe-4S] cluster.

Belongs to the radical SAM superfamily. MoaA family. In terms of assembly, monomer and homodimer. [4Fe-4S] cluster serves as cofactor.

The catalysed reaction is GTP + AH2 + S-adenosyl-L-methionine = (8S)-3',8-cyclo-7,8-dihydroguanosine 5'-triphosphate + 5'-deoxyadenosine + L-methionine + A + H(+). It functions in the pathway cofactor biosynthesis; molybdopterin biosynthesis. Functionally, catalyzes the cyclization of GTP to (8S)-3',8-cyclo-7,8-dihydroguanosine 5'-triphosphate. This chain is GTP 3',8-cyclase, found in Picosynechococcus sp. (strain ATCC 27264 / PCC 7002 / PR-6) (Agmenellum quadruplicatum).